A 546-amino-acid chain; its full sequence is G1/S-specific cyclin CLN1 (546 aa).

The tract at residues Ser-224–Met-265 is disordered.

This sequence belongs to the cyclin family.

In terms of biological role, essential for the control of the cell cycle at the G1/S (start) transition. Interacts with the CDC28 protein kinase to form MPF. This is G1/S-specific cyclin CLN1 (CLN1) from Saccharomyces cerevisiae (strain ATCC 204508 / S288c) (Baker's yeast).